A 100-amino-acid chain; its full sequence is NADH-quinone oxidoreductase subunit K 1 (100 aa).

3 helical membrane passes run 4–24 (LHSY…GVLV), 29–49 (IVIF…FIAL), and 60–80 (IFVF…LALM).

It belongs to the complex I subunit 4L family. In terms of assembly, NDH-1 is composed of 14 different subunits. Subunits NuoA, H, J, K, L, M, N constitute the membrane sector of the complex.

Its subcellular location is the cell inner membrane. It catalyses the reaction a quinone + NADH + 5 H(+)(in) = a quinol + NAD(+) + 4 H(+)(out). In terms of biological role, NDH-1 shuttles electrons from NADH, via FMN and iron-sulfur (Fe-S) centers, to quinones in the respiratory chain. The immediate electron acceptor for the enzyme in this species is believed to be ubiquinone. Couples the redox reaction to proton translocation (for every two electrons transferred, four hydrogen ions are translocated across the cytoplasmic membrane), and thus conserves the redox energy in a proton gradient. This Geobacter sulfurreducens (strain ATCC 51573 / DSM 12127 / PCA) protein is NADH-quinone oxidoreductase subunit K 1.